We begin with the raw amino-acid sequence, 87 residues long: UPF0367 protein SynWH7803_2240 (87 aa).

This sequence belongs to the UPF0367 family.

The sequence is that of UPF0367 protein SynWH7803_2240 from Synechococcus sp. (strain WH7803).